A 607-amino-acid chain; its full sequence is Elongation factor 4 (607 aa).

A tr-type G domain is found at 11–193 (SKIRNFSIIA…QIVEKVPAPT (183 aa)). GTP is bound by residues 23 to 28 (DHGKST) and 140 to 143 (NKID).

Belongs to the TRAFAC class translation factor GTPase superfamily. Classic translation factor GTPase family. LepA subfamily.

The protein resides in the cell membrane. The catalysed reaction is GTP + H2O = GDP + phosphate + H(+). Its function is as follows. Required for accurate and efficient protein synthesis under certain stress conditions. May act as a fidelity factor of the translation reaction, by catalyzing a one-codon backward translocation of tRNAs on improperly translocated ribosomes. Back-translocation proceeds from a post-translocation (POST) complex to a pre-translocation (PRE) complex, thus giving elongation factor G a second chance to translocate the tRNAs correctly. Binds to ribosomes in a GTP-dependent manner. This chain is Elongation factor 4, found in Bacillus cereus (strain AH820).